We begin with the raw amino-acid sequence, 288 residues long: Small ribosomal subunit protein uS9m (288 aa).

Positions 269–288 (VERKKPGKKKARKMPTWVKR) are disordered.

Belongs to the universal ribosomal protein uS9 family.

Its subcellular location is the mitochondrion. The polypeptide is Small ribosomal subunit protein uS9m (MRPS9) (Candida glabrata (strain ATCC 2001 / BCRC 20586 / JCM 3761 / NBRC 0622 / NRRL Y-65 / CBS 138) (Yeast)).